Reading from the N-terminus, the 248-residue chain is Probable transcriptional regulatory protein Smed_2641 (248 aa).

Belongs to the TACO1 family.

Its subcellular location is the cytoplasm. This chain is Probable transcriptional regulatory protein Smed_2641, found in Sinorhizobium medicae (strain WSM419) (Ensifer medicae).